Consider the following 225-residue polypeptide: Histone H3-like centromeric protein cid (225 aa).

A compositionally biased stretch (basic residues) spans 1-11 (MPRHSRAKRAP). The disordered stretch occupies residues 1–131 (MPRHSRAKRA…KAANPMSRAK (131 aa)). Positions 43–52 (FTTSQLTLQD) are enriched in polar residues. A phosphoserine mark is found at Ser-74 and Ser-75. Phosphothreonine is present on Thr-76. At Ser-77 the chain carries Phosphoserine. A compositionally biased stretch (polar residues) spans 86–103 (RYPTTRSPQTRRMTVQQE). The H3-like stretch occupies residues 133–225 (MDREIRRLQH…AYICDRGRQF (93 aa)).

This sequence belongs to the histone H3 family. As to quaternary structure, forms a nucleosome-like histone octamer containing two molecules each of H2A, H2B, cid and H4 assembled in one cid-H4 heterotetramer and two H2A-H2B heterodimers. The cid-H4 heterotetramer is more compact and structurally more rigid than corresponding H3-H4 heterotetramers. Interacts with the condensin subunit Cap-G. Interacts with Chrac-14.

The protein localises to the nucleus. Its subcellular location is the chromosome. It is found in the centromere. The protein resides in the kinetochore. Its function is as follows. Histone H3-like variant which exclusively replaces conventional H3 in the nucleosome core of centromeric chromatin at the inner plate of the kinetochore. Required for recruitment and assembly of kinetochore proteins, mitotic progression and chromosome segregation. May serve as an epigenetic mark that propagates centromere identity through replication and cell division. The chain is Histone H3-like centromeric protein cid from Drosophila melanogaster (Fruit fly).